The sequence spans 75 residues: MNSWQKIRMAKQQQVRVARQHRAAKLGRLYKAKKLRAELCEKLQLQRVNNDAALAKAFEEEFVYPHFSFYLYTLN.

The polypeptide is 8.9 kDa basic protein (P8.9) (Orgyia pseudotsugata (Douglas-fir tussock moth)).